A 254-amino-acid chain; its full sequence is Insulin-like growth factor-binding protein 4 (254 aa).

The N-terminal stretch at 1 to 21 is a signal peptide; sequence MLPFGLVAALLLAAGPRPSLG. One can recognise an IGFBP N-terminal domain in the interval 23 to 103; that stretch reads EAIHCPPCSE…MHGQGVCTEL (81 aa). Cystine bridges form between C27–C53, C30–C55, C38–C56, C44–C59, C67–C80, and C74–C100. An N-linked (GlcNAc...) asparagine glycan is attached at N125. C131 and C138 are joined by a disulfide. The segment at 149 to 169 is disordered; the sequence is RSKMKVVGTPREEPRPVPQGS. The 79-residue stretch at 167-245 folds into the Thyroglobulin type-1 domain; that stretch reads QGSCQSELHR…GLEPKGELDC (79 aa). 3 disulfides stabilise this stretch: C170–C200, C211–C222, and C224–C245. S251 carries the post-translational modification Phosphoserine.

As to quaternary structure, binds IGF2 more than IGF1.

The protein localises to the secreted. IGF-binding proteins prolong the half-life of the IGFs and have been shown to either inhibit or stimulate the growth promoting effects of the IGFs on cell culture. They alter the interaction of IGFs with their cell surface receptors. The protein is Insulin-like growth factor-binding protein 4 (Igfbp4) of Rattus norvegicus (Rat).